Consider the following 203-residue polypeptide: Recombination protein RecR (203 aa).

The C4-type zinc finger occupies 57–73 (CQSCGTLKSNSLGCNNC). The Toprim domain occupies 81 to 175 (NKICVVEDIA…KVTKLAQGLP (95 aa)).

The protein belongs to the RecR family.

Its function is as follows. May play a role in DNA repair. It seems to be involved in an RecBC-independent recombinational process of DNA repair. It may act with RecF and RecO. The chain is Recombination protein RecR from Pelagibacter ubique (strain HTCC1062).